Here is a 345-residue protein sequence, read N- to C-terminus: Heat-inducible transcription repressor HrcA (345 aa).

This sequence belongs to the HrcA family.

Its function is as follows. Negative regulator of class I heat shock genes (grpE-dnaK-dnaJ and groELS operons). Prevents heat-shock induction of these operons. This chain is Heat-inducible transcription repressor HrcA, found in Dehalococcoides mccartyi (strain ATCC BAA-2266 / KCTC 15142 / 195) (Dehalococcoides ethenogenes (strain 195)).